A 154-amino-acid polypeptide reads, in one-letter code: 6,7-dimethyl-8-ribityllumazine synthase (154 aa).

5-amino-6-(D-ribitylamino)uracil contacts are provided by residues tryptophan 22, 56–58 (AWE), and 80–82 (CVI). Residue 85 to 86 (DT) coordinates (2S)-2-hydroxy-3-oxobutyl phosphate. Histidine 88 (proton donor) is an active-site residue. Asparagine 113 is a 5-amino-6-(D-ribitylamino)uracil binding site. Arginine 127 provides a ligand contact to (2S)-2-hydroxy-3-oxobutyl phosphate.

This sequence belongs to the DMRL synthase family. Forms an icosahedral capsid composed of 60 subunits, arranged as a dodecamer of pentamers.

It carries out the reaction (2S)-2-hydroxy-3-oxobutyl phosphate + 5-amino-6-(D-ribitylamino)uracil = 6,7-dimethyl-8-(1-D-ribityl)lumazine + phosphate + 2 H2O + H(+). Its pathway is cofactor biosynthesis; riboflavin biosynthesis; riboflavin from 2-hydroxy-3-oxobutyl phosphate and 5-amino-6-(D-ribitylamino)uracil: step 1/2. Its function is as follows. Catalyzes the formation of 6,7-dimethyl-8-ribityllumazine by condensation of 5-amino-6-(D-ribitylamino)uracil with 3,4-dihydroxy-2-butanone 4-phosphate. This is the penultimate step in the biosynthesis of riboflavin. In Xanthomonas oryzae pv. oryzae (strain MAFF 311018), this protein is 6,7-dimethyl-8-ribityllumazine synthase.